The following is a 673-amino-acid chain: ATP-dependent zinc metalloprotease FtsH (673 aa).

Residues 1-7 (MNGFFKN) lie on the Cytoplasmic side of the membrane. A helical membrane pass occupies residues 8–28 (LSLWLVIGLLMVMLFNLFNSP). The Periplasmic segment spans residues 29 to 100 (QGPGQSITFS…DVREPEGTPM (72 aa)). A helical membrane pass occupies residues 101–121 (LMQILISWFPMLLLIAVWIYF). Residues 122–673 (MRQMQSGGGR…DTPEGDDKDR (552 aa)) lie on the Cytoplasmic side of the membrane. 194–201 (GPPGTGKT) lines the ATP pocket. His416 lines the Zn(2+) pocket. The active site involves Glu417. Residues His420 and Asp492 each contribute to the Zn(2+) site. The tract at residues 601-673 (ALKPLKKKDE…DTPEGDDKDR (73 aa)) is disordered. Residues 648 to 660 (STRTATEASTQEV) are compositionally biased toward polar residues. Basic and acidic residues predominate over residues 661 to 673 (VSKDTPEGDDKDR).

This sequence in the central section; belongs to the AAA ATPase family. The protein in the C-terminal section; belongs to the peptidase M41 family. In terms of assembly, homohexamer. It depends on Zn(2+) as a cofactor.

It localises to the cell inner membrane. Functionally, acts as a processive, ATP-dependent zinc metallopeptidase for both cytoplasmic and membrane proteins. Plays a role in the quality control of integral membrane proteins. The polypeptide is ATP-dependent zinc metalloprotease FtsH (Magnetococcus marinus (strain ATCC BAA-1437 / JCM 17883 / MC-1)).